Here is an 872-residue protein sequence, read N- to C-terminus: Protein SCD5 (872 aa).

2 disordered regions span residues 1–98 (MSFD…SGGD) and 209–239 (PKPR…TGDQ). Residues 48 to 85 (FWDQGSRSHSDTTLSYRNNHSNTAADNATNVSSPQKDN) are compositionally biased toward polar residues. The KKRVK motif; Required for interaction with GLC7, endocytosis and actin cytoskeleton organization signature appears at 272 to 276 (KKVRF). Disordered stretches follow at residues 280–321 (ITFQ…LDFT) and 338–358 (SGLV…KKVL). 2 stretches are compositionally biased toward polar residues: residues 284–296 (DPPN…SNNS) and 339–348 (GLVSSLPSEQ). 12 tandem repeats follow at residues 405-424 (QLPL…HLVR), 439-458 (QTGL…YLMR), 479-498 (SGGL…YLMK), 534-545 (SPNITLPQSNQQ), 564-575 (SPQHTYSNNVRI), 593-604 (PPQNTLPQHQQS), 608-619 (SPQNTIPQHQRS), 623-634 (SPQNTFTQNQPI), 636-647 (SPQHTYSNNQAT), 650-661 (SPQNTYTNNQQQ), 683-694 (PPQHMYSNVQKQ), and 717-728 (SPQNAANSYFQS). The segment at 405–448 (QLPLEPLKPTATGSANHLVREEYNQGLHPSNGAIQTGLQPLKPT) is 3 X 20 AA approximate repeats. Phosphothreonine; by PRK1 is present on residues Thr416 and Thr450. The interval 460–489 (HMEQPQSIKPSSTPETVTNSGGLQPLKPTA) is disordered. Residues 462 to 481 (EQPQSIKPSSTPETVTNSGG) show a composition bias toward polar residues. Position 490 is a phosphothreonine; by PRK1 (Thr490). 2 disordered regions span residues 516–571 (QFTN…TYSN) and 591–620 (AFPP…QRSQ). The tract at residues 534–728 (SPNITLPQSN…QNAANSYFQS (195 aa)) is 9 X 12 AA approximate repeats. Residue Ser564 is modified to Phosphoserine. The span at 594–620 (PQNTLPQHQQSHLLSPQNTIPQHQRSQ) shows a compositional bias: polar residues. A disordered region spans residues 649 to 681 (ISPQNTYTNNQQQPQHLPPPPPPRAQQQQQGAI). Over residues 651 to 663 (PQNTYTNNQQQPQ) the composition is skewed to low complexity. Polar residues predominate over residues 697–727 (LVPTQPSYTNSPSIQSPNFLSPQNAANSYFQ). Disordered regions lie at residues 697-758 (LVPT…ISSF) and 806-838 (NSDI…QFPF). The segment covering 728 to 745 (SLLSSSPSPNPTPSNAST) has biased composition (low complexity). 2 stretches are compositionally biased toward polar residues: residues 746-758 (VNGN…ISSF) and 806-815 (NSDIHSQPNK). The span at 823–835 (QQVHQQQQQQQQQ) shows a compositional bias: low complexity.

In terms of assembly, interacts (via KKVRF motif) with phosphatase GLC7. In terms of processing, phosphorylation by PRK1 and/or AKL1 on Thr-416, Thr-450 and Thr-490 of repeats 1-1, 1-2 and/or 1-3 negatively regulates SCD5 function in endocytosis and actin cytoskeleton organization.

Its subcellular location is the membrane. Functionally, regulates both fluid phase and receptor-mediated endocytosis. Involved in vesicular transport at a late stage of the secretory pathway. Regulates actin cytoskeleton organization. This chain is Protein SCD5 (SCD5), found in Saccharomyces cerevisiae (strain ATCC 204508 / S288c) (Baker's yeast).